The chain runs to 244 residues: 1-(5-phosphoribosyl)-5-[(5-phosphoribosylamino)methylideneamino] imidazole-4-carboxamide isomerase (244 aa).

Aspartate 10 (proton acceptor) is an active-site residue. Residue aspartate 132 is the Proton donor of the active site.

This sequence belongs to the HisA/HisF family.

The protein localises to the cytoplasm. It carries out the reaction 1-(5-phospho-beta-D-ribosyl)-5-[(5-phospho-beta-D-ribosylamino)methylideneamino]imidazole-4-carboxamide = 5-[(5-phospho-1-deoxy-D-ribulos-1-ylimino)methylamino]-1-(5-phospho-beta-D-ribosyl)imidazole-4-carboxamide. It functions in the pathway amino-acid biosynthesis; L-histidine biosynthesis; L-histidine from 5-phospho-alpha-D-ribose 1-diphosphate: step 4/9. The protein is 1-(5-phosphoribosyl)-5-[(5-phosphoribosylamino)methylideneamino] imidazole-4-carboxamide isomerase of Stenotrophomonas maltophilia (strain R551-3).